A 1707-amino-acid chain; its full sequence is Kinesin-like protein KIF1A (1707 aa).

A Kinesin motor domain is found at 5-354; sequence SVKVAVRVRP…LRYADRAKQI (350 aa). The ATP site is built by glycine 102, lysine 103, serine 104, tyrosine 105, and serine 215. Position 104 (serine 104) interacts with Mg(2+). Positions 439–466 form a coiled coil; sequence SEEAIERLKETEKIIAELNETWEEKLRR. The 57-residue stretch at 525–581 folds into the FHA domain; that stretch reads TRVGREDAERRQDIVLSGHFIKEEHCIFRSDSRGGGEAVVTLEPCEGADTYVNGKKV. Coiled-coil stretches lie at residues 637 to 671 and 811 to 831; these read EKQG…LLEQ and LEKL…AAEV. The required for interaction with CALM1, PPFIA2 and TANC2 stretch occupies residues 657 to 1105; sequence QYRREREEAT…LCKDVLSPLR (449 aa). Disordered stretches follow at residues 1424–1462 and 1536–1576; these read PVPE…EVPN and TDVR…EKEP. Positions 1429–1453 are enriched in low complexity; sequence LSPASSEDSESRSSSGASSPLSAEG. The PH domain occupies 1592 to 1690; sequence IVSKKGYLHF…WLYAFNPLLA (99 aa).

This sequence belongs to the TRAFAC class myosin-kinesin ATPase superfamily. Kinesin family. Unc-104 subfamily. In terms of assembly, dimeric motor; dimerization is required for ATP-driven processive motility. Monomer in vitro. Interacts with PPFIA1 and PPFIA4. Interacts with CALM1; the interaction is increased in presence of calcium and increases neuronal dense core vesicles motility. Interacts with PPFIA2 and TANC2; both interactions allow the recruitment of neuronal dense core vesicles to dendritic spines and decrease in presence of calcium. Interacts with SYT4 (unphosphorylated) and SYT11; both interactions increase in presence of calcium. Interacts with MADD.

It is found in the cytoplasm. Its subcellular location is the cytoskeleton. The protein resides in the cell projection. The protein localises to the neuron projection. It localises to the axon. It is found in the perinuclear region. Its subcellular location is the synapse. The protein resides in the cytoplasmic vesicle. The protein localises to the secretory vesicle. It localises to the neuronal dense core vesicle membrane. The enzyme catalyses ATP + H2O + a kinesin associated with a microtubule at position (n) = ADP + phosphate a kinesin associated with a microtubule at position (n+1, toward the plus end).. Kinesin motor with a plus-end-directed microtubule motor activity, involved in anterograde axonal transport of synaptic vesicle precursors. Also required for neuronal dense core vesicles (DCVs) transport to the dendritic spines and axons. The interaction calcium-dependent with CALM1 increases vesicle motility and interaction with the scaffolding proteins PPFIA2 and TANC2 recruits DCVs to synaptic sites. The polypeptide is Kinesin-like protein KIF1A (Rattus norvegicus (Rat)).